Consider the following 271-residue polypeptide: Phosphatidylglycerol--prolipoprotein diacylglyceryl transferase (271 aa).

The next 7 helical transmembrane spans lie at 25-45 (WYGIMYDVALLLALLLAKFFV), 60-80 (YFIWVEIGVILGARLGYILIY), 103-123 (FVGIRGMSYHGAIIGFLIATL), 134-154 (WIFLDLVALSVPLAYVFGRIG), 181-201 (PSQFYEAFLEGIVVFIIVYLA), 209-229 (GELILVYAGAYSLARFICEFY), and 235-255 (GIGFVLWGMSMGQILSFIMFI). Position 152 (Arg-152) interacts with a 1,2-diacyl-sn-glycero-3-phospho-(1'-sn-glycerol).

This sequence belongs to the Lgt family.

It is found in the cell inner membrane. It carries out the reaction L-cysteinyl-[prolipoprotein] + a 1,2-diacyl-sn-glycero-3-phospho-(1'-sn-glycerol) = an S-1,2-diacyl-sn-glyceryl-L-cysteinyl-[prolipoprotein] + sn-glycerol 1-phosphate + H(+). It participates in protein modification; lipoprotein biosynthesis (diacylglyceryl transfer). Its function is as follows. Catalyzes the transfer of the diacylglyceryl group from phosphatidylglycerol to the sulfhydryl group of the N-terminal cysteine of a prolipoprotein, the first step in the formation of mature lipoproteins. This is Phosphatidylglycerol--prolipoprotein diacylglyceryl transferase from Campylobacter jejuni subsp. doylei (strain ATCC BAA-1458 / RM4099 / 269.97).